Reading from the N-terminus, the 121-residue chain is Nitrogenase-stabilizing/protective protein NifW (121 aa).

The protein belongs to the NifW family. In terms of assembly, homotrimer; associates with NifD.

Functionally, may protect the nitrogenase Fe-Mo protein from oxidative damage. In Synechococcus sp. (strain JA-2-3B'a(2-13)) (Cyanobacteria bacterium Yellowstone B-Prime), this protein is Nitrogenase-stabilizing/protective protein NifW.